A 721-amino-acid chain; its full sequence is Centlein (721 aa).

Residues 52 to 164 (KNEKAISEQT…LRDENEEVVN (113 aa)) adopt a coiled-coil conformation. Disordered regions lie at residues 156 to 180 (RDENEEVVNPEEKEHCPTDKAKSEM) and 259 to 288 (ETSQNIRPIENDGNQKETDQTEDSRAQQEV). Basic and acidic residues-rich tracts occupy residues 165–178 (PEEKEHCPTDKAKS) and 267–284 (IENDGNQKETDQTEDSRA). 2 coiled-coil regions span residues 345-515 (LLRE…EDLK) and 573-626 (QSEQ…TQKS). A Phosphothreonine modification is found at Thr658.

Interacts with CEP250 and CEP68. Interacts with NEK2; the interaction leads to phosphorylation of CNTLN. In terms of processing, phosphorylated directly or indirectly by NEK2.

It is found in the cytoplasm. It localises to the cytoskeleton. The protein resides in the microtubule organizing center. Its subcellular location is the centrosome. The protein localises to the centriole. Its function is as follows. Required for centrosome cohesion and recruitment of CEP68 to centrosomes. The sequence is that of Centlein from Rattus norvegicus (Rat).